A 344-amino-acid chain; its full sequence is Transcription factor HHO3 (344 aa).

Disordered regions lie at residues 90 to 122 and 156 to 212; these read KWSSASSDETDKDEEAEKTEMMTNENNDGDKKK and AFQP…KQRR. A compositionally biased stretch (acidic residues) spans 97 to 106; the sequence is DETDKDEEAE. The segment covering 178-188 has biased composition (low complexity); it reads TPTSTTTTSST. In terms of domain architecture, HTH myb-type spans 206–266; sequence SNRKQRRCWS…HLQKYRLHTR (61 aa). Residues 237–262 constitute a DNA-binding region (H-T-H motif); it reads PKQIRDLMKVDGLTNDEVKSHLQKYR. Positions 306 to 344 are disordered; the sequence is PVATQPPQSSTSGERSNRGCKSPATSSTTTHTPHLLPLS. Residues 310–319 show a composition bias toward polar residues; it reads QPPQSSTSGE. The span at 330-344 shows a compositional bias: low complexity; that stretch reads TSSTTTHTPHLLPLS.

It localises to the nucleus. Its function is as follows. Probable transcription factor involved in phosphate signaling in roots. The sequence is that of Transcription factor HHO3 from Arabidopsis thaliana (Mouse-ear cress).